The primary structure comprises 397 residues: Acetate kinase (397 aa).

Mg(2+) is bound at residue Asn-7. Lys-14 serves as a coordination point for ATP. Substrate is bound at residue Arg-90. The active-site Proton donor/acceptor is Asp-147. ATP contacts are provided by residues 207-211 (HLGNG), 282-284 (DFR), and 330-334 (GIGEN). Glu-384 provides a ligand contact to Mg(2+).

Belongs to the acetokinase family. Homodimer. Mg(2+) serves as cofactor. Mn(2+) is required as a cofactor.

The protein localises to the cytoplasm. The enzyme catalyses acetate + ATP = acetyl phosphate + ADP. The protein operates within metabolic intermediate biosynthesis; acetyl-CoA biosynthesis; acetyl-CoA from acetate: step 1/2. Its function is as follows. Catalyzes the formation of acetyl phosphate from acetate and ATP. Can also catalyze the reverse reaction. The polypeptide is Acetate kinase (Agathobacter rectalis (strain ATCC 33656 / DSM 3377 / JCM 17463 / KCTC 5835 / VPI 0990) (Eubacterium rectale)).